The primary structure comprises 907 residues: Clumping factor B (907 aa).

An N-terminal signal peptide occupies residues 1 to 44 (MKKRIDYLSNKQNKYSIRRFTVGTTSVIVGATILFGIGNHQAQA). The short motif at 15 to 26 (YSIRRFTVGTTS) is the YSIRK-G/S signaling motif element. Composition is skewed to polar residues over residues 44-61 (ASEQSNDTTQSSKNNASA) and 68-101 (MIETPQLNTTANDTSDISANTNSANVDSTAKPMS). The disordered stretch occupies residues 44 to 191 (ASEQSNDTTQ…AQGTSKPSVR (148 aa)). Positions 45 to 542 (SEQSNDTTQS…GSADGDSAVN (498 aa)) are ligand binding A region. Residues 102–119 (TQTSNTTTTEPASTNETP) are compositionally biased toward low complexity. The segment covering 134-189 (QDQTVPQEANSQVDNKTTNDANSIATNSELKNPQTLDLPQSSPQTISNAQGTSKPS) has biased composition (polar residues). The MIDAS-like motif signature appears at 272 to 276 (DYSNS). Residues 530 to 879 (YGGGSADGDS…ETGDKSENTN (350 aa)) are disordered. Over residues 545 to 555 (DPTPGPPVDPE) the composition is skewed to pro residues. The span at 556–831 (PSPDPEPEPS…SDSDSDSDSD (276 aa)) shows a compositional bias: acidic residues. The span at 835–846 (RVTPPNNEQKAP) shows a compositional bias: polar residues. Positions 863–876 (HKTDALPETGDKSE) are enriched in basic and acidic residues. The LPXTG sorting signal motif lies at 868 to 872 (LPETG). A Pentaglycyl murein peptidoglycan amidated threonine modification is found at threonine 871. Positions 872 to 907 (GDKSENTNATLFGAMMALLGSLLLFRKRKQDHKEKA) are cleaved as a propeptide — removed by sortase.

The protein belongs to the serine-aspartate repeat-containing protein (SDr) family. In terms of processing, proteolytically cleaved by aureolysin (aur). This cleavage leads to the inactivation of ClfB.

The protein localises to the secreted. It localises to the cell wall. Functionally, cell surface-associated protein implicated in virulence by promoting bacterial attachment to both alpha- and beta-chains of human fibrinogen and inducing the formation of bacterial clumps. In Staphylococcus aureus (strain MW2), this protein is Clumping factor B (clfB).